The primary structure comprises 298 residues: O-glycoside alpha-1,2-mannosyltransferase homolog 6 (298 aa).

Glu220 serves as the catalytic Nucleophile.

This sequence belongs to the glycosyltransferase 15 family.

The protein localises to the cytoplasm. The protein resides in the nucleus. In terms of biological role, probable mannosyltransferase involved in O-glycosylation of cell wall and secreted proteins. This is O-glycoside alpha-1,2-mannosyltransferase homolog 6 (omh6) from Schizosaccharomyces pombe (strain 972 / ATCC 24843) (Fission yeast).